The chain runs to 306 residues: D-alanine--D-alanine ligase (306 aa).

An ATP-grasp domain is found at 105–300 (KMIWQAAGIS…FDELVIQILE (196 aa)). 131–186 (TDRLGLPLIIKPAREGSTIGLNKVDYAQDMQSAYQTAAQHDSLVIAEQFIQGIELT) serves as a coordination point for ATP. The Mg(2+) site is built by D254, E267, and N269.

It belongs to the D-alanine--D-alanine ligase family. Mg(2+) serves as cofactor. Requires Mn(2+) as cofactor.

The protein localises to the cytoplasm. The enzyme catalyses 2 D-alanine + ATP = D-alanyl-D-alanine + ADP + phosphate + H(+). Its pathway is cell wall biogenesis; peptidoglycan biosynthesis. In terms of biological role, cell wall formation. This chain is D-alanine--D-alanine ligase, found in Nitrosomonas eutropha (strain DSM 101675 / C91 / Nm57).